The chain runs to 359 residues: Chorismate synthase (359 aa).

Arg47 contacts NADP(+). FMN-binding positions include 123 to 125 (RSS), Gly283, 298 to 302 (KPTSS), and Arg326.

It belongs to the chorismate synthase family. In terms of assembly, homotetramer. The cofactor is FMNH2.

The enzyme catalyses 5-O-(1-carboxyvinyl)-3-phosphoshikimate = chorismate + phosphate. Its pathway is metabolic intermediate biosynthesis; chorismate biosynthesis; chorismate from D-erythrose 4-phosphate and phosphoenolpyruvate: step 7/7. In terms of biological role, catalyzes the anti-1,4-elimination of the C-3 phosphate and the C-6 proR hydrogen from 5-enolpyruvylshikimate-3-phosphate (EPSP) to yield chorismate, which is the branch point compound that serves as the starting substrate for the three terminal pathways of aromatic amino acid biosynthesis. This reaction introduces a second double bond into the aromatic ring system. The sequence is that of Chorismate synthase from Chlamydia caviae (strain ATCC VR-813 / DSM 19441 / 03DC25 / GPIC) (Chlamydophila caviae).